Reading from the N-terminus, the 264-residue chain is Thiazole synthase (264 aa).

Lysine 106 acts as the Schiff-base intermediate with DXP in catalysis. Residues glycine 167, 193–194 (AG), and 215–216 (NT) each bind 1-deoxy-D-xylulose 5-phosphate.

It belongs to the ThiG family. Homotetramer. Forms heterodimers with either ThiH or ThiS.

It is found in the cytoplasm. It carries out the reaction [ThiS sulfur-carrier protein]-C-terminal-Gly-aminoethanethioate + 2-iminoacetate + 1-deoxy-D-xylulose 5-phosphate = [ThiS sulfur-carrier protein]-C-terminal Gly-Gly + 2-[(2R,5Z)-2-carboxy-4-methylthiazol-5(2H)-ylidene]ethyl phosphate + 2 H2O + H(+). Its pathway is cofactor biosynthesis; thiamine diphosphate biosynthesis. Functionally, catalyzes the rearrangement of 1-deoxy-D-xylulose 5-phosphate (DXP) to produce the thiazole phosphate moiety of thiamine. Sulfur is provided by the thiocarboxylate moiety of the carrier protein ThiS. In vitro, sulfur can be provided by H(2)S. The sequence is that of Thiazole synthase from Xanthomonas euvesicatoria pv. vesicatoria (strain 85-10) (Xanthomonas campestris pv. vesicatoria).